The chain runs to 79 residues: Immunity protein CdiI (79 aa).

The next 2 helical transmembrane spans lie at 12–32 and 51–71; these read IIFF…IGLI and VVLF…LGLW.

In terms of assembly, probably interacts with cognate toxin CdiA.

Its subcellular location is the cell inner membrane. Its function is as follows. Immunity protein component of a toxin-immunity protein module, which functions as a cellular contact-dependent growth inhibition (CDI) system. CDI modules allow bacteria to communicate with and inhibit the growth of closely related neighboring bacteria in a contact-dependent fashion. Protects cells against CdiA from the same strain, its cognate toxin protein. Growth inhibition is reversible upon induction of this protein, occurring about 2.5 hours after induction, and requires an energy source. Does not protect against non-cognate CdiA from E.coli strain 563 / UPEC, D.dadantii strain 3937 or Y.pestis strain CO92. This Escherichia coli protein is Immunity protein CdiI.